A 358-amino-acid chain; its full sequence is Alanine racemase (358 aa).

The active-site Proton acceptor; specific for D-alanine is the Lys-34. N6-(pyridoxal phosphate)lysine is present on Lys-34. A substrate-binding site is contributed by Arg-129. Tyr-254 functions as the Proton acceptor; specific for L-alanine in the catalytic mechanism. A substrate-binding site is contributed by Met-302.

The protein belongs to the alanine racemase family. Pyridoxal 5'-phosphate serves as cofactor.

It catalyses the reaction L-alanine = D-alanine. It functions in the pathway amino-acid biosynthesis; D-alanine biosynthesis; D-alanine from L-alanine: step 1/1. Catalyzes the interconversion of L-alanine and D-alanine. May also act on other amino acids. The polypeptide is Alanine racemase (alr) (Vibrio atlanticus (strain LGP32) (Vibrio splendidus (strain Mel32))).